A 445-amino-acid polypeptide reads, in one-letter code: Histamine H3 receptor (445 aa).

Residues 1-39 lie on the Extracellular side of the membrane; that stretch reads MERAPPDGLMNASGALAGEAAAAGGARGFSAAWTAVLAA. Asparagine 11 carries an N-linked (GlcNAc...) asparagine glycan. The helical transmembrane segment at 40–60 threads the bilayer; sequence LMALLIVATVLGNALVMLAFV. Over 61-70 the chain is Cytoplasmic; it reads ADSSLRTQNN. A helical membrane pass occupies residues 71–91; the sequence is FFLLNLAISDFLVGAFCIPLY. Residues 92-108 are Extracellular-facing; that stretch reads VPYVLTGRWTFGRGLCK. Residues cysteine 107 and cysteine 188 are joined by a disulfide bond. A helical membrane pass occupies residues 109-129; that stretch reads LWLVVDYLLCASSVFNIVLIS. Topologically, residues 130–156 are cytoplasmic; that stretch reads YDRFLSVTRAVSYRAQQGDTRRAVRKM. A helical membrane pass occupies residues 157–177; that stretch reads ALVWVLAFLLYGPAILSWEYL. Residues 178–196 are Extracellular-facing; that stretch reads SGGSSIPEGHCYAEFFYNW. Residues 197-217 form a helical membrane-spanning segment; the sequence is YFLITASTLEFFTPFLSVTFF. The Cytoplasmic portion of the chain corresponds to 218–359; that stretch reads NLSIYLNIQR…LSRDKKVAKS (142 aa). Disordered regions lie at residues 234–259 and 273–336; these read DGGR…PSCW and HRYG…LEKR. The span at 241 to 256 shows a compositional bias: pro residues; it reads PEPPPDAQPSPPPAPP. Residues 289–299 show a composition bias toward gly residues; that stretch reads AGLGGGSGGGA. The span at 300–312 shows a compositional bias: low complexity; that stretch reads AASPTSSSGSSSR. The helical transmembrane segment at 360–380 threads the bilayer; that stretch reads LAIIVSIFGLCWAPYTLLMII. Residues 381-396 are Extracellular-facing; the sequence is RAACHGHCVPDYWYET. The chain crosses the membrane as a helical span at residues 397-417; the sequence is SFWLLWANSAVNPVLYPLCHY. At 418–445 the chain is on the cytoplasmic side; the sequence is SFRRAFTKLLCPQKLKVQPHGSLEQCWK. Residue serine 439 is modified to Phosphoserine.

It belongs to the G-protein coupled receptor 1 family.

Its subcellular location is the cell membrane. The H3 subclass of histamine receptors could mediate the histamine signals in CNS and peripheral nervous system. Signals through the inhibition of adenylate cyclase and displays high constitutive activity (spontaneous activity in the absence of agonist). This is Histamine H3 receptor (Hrh3) from Mus musculus (Mouse).